The primary structure comprises 602 residues: MTNVPVSRLRNFCIIAHIDHGKSTLADRLLQDTATVASRDMQDQFLDNMELERERGITIKLQAARMKYTATDGNEYVLNLIDTPGHVDFSYEVSRSLQACEGALLVVDASQGVEAQTLANVYLALENDLEIIPVLNKVDLPGSDPEKIKKEIESIIGLDTSQAISCSAKTGLGVTDILQAVVERVPPPKDTLEQATQALIFDSYYDPYRGVIVYFRVTAGSISARDQILLMASKKSYELDEIGIMAPDQQKVNELHAGEVGYLAASIKAVSDARVGDTITLLNAPAADPLPGYTEAKPMVFCGLFPTDADQYPDLREALEKLQLSDAALKYEPETSSAMGFGFRCGFLGLLHMEIVQERLEREYDLDLIVTAPSVIYQVNMLNGEALMIDNPATLPDPQHRDSIEEPYVRMEIYAPNDYNGTLMGLCQDRRGEFVDMKYITTDRVTLIYEMPLAEVVTDFFDQMKSRTKGYASMEYHLIGYRKNDLVRLDVLINSDKADPLTTIVHRDKAYGVGRALVDKLKELIPRQQFKIPLQASIGSRIIASQNISALRKDVLAKCYGGDISRKKKLLQKQAKGKKRMKSMGKVDVPQEAFMAVLKLNS.

A tr-type G domain is found at 7 to 189 (SRLRNFCIIA…AVVERVPPPK (183 aa)). GTP-binding positions include 19–24 (DHGKST) and 136–139 (NKVD).

The protein belongs to the TRAFAC class translation factor GTPase superfamily. Classic translation factor GTPase family. LepA subfamily.

Its subcellular location is the cell inner membrane. It catalyses the reaction GTP + H2O = GDP + phosphate + H(+). Required for accurate and efficient protein synthesis under certain stress conditions. May act as a fidelity factor of the translation reaction, by catalyzing a one-codon backward translocation of tRNAs on improperly translocated ribosomes. Back-translocation proceeds from a post-translocation (POST) complex to a pre-translocation (PRE) complex, thus giving elongation factor G a second chance to translocate the tRNAs correctly. Binds to ribosomes in a GTP-dependent manner. This Prochlorococcus marinus (strain MIT 9211) protein is Elongation factor 4.